Here is a 412-residue protein sequence, read N- to C-terminus: Small ribosomal subunit protein mL103 (rPPR7) (412 aa).

The N-terminal 14 residues, 1-14 (MASSRISLRLVRRF), are a transit peptide targeting the mitochondrion. Polar residues predominate over residues 21-37 (GTTTAPSSGKISVSKAK). Residues 21 to 43 (GTTTAPSSGKISVSKAKSTLRKE) are disordered. PPR repeat units follow at residues 101–135 (EEPFYSTLIRSYGQASMFNHAMRTFEQMDQYGTPR), 136–166 (SAVSFNALLNACLHSKNFDKVPQLFDEIPQR), 173–207 (DKISYGILIKSYCDSGTPEKAIEIMRQMQGKGMEV), 208–242 (TTIAFTTILSSLYKKGELEVADNLWNEMVKKGCEL), 243–276 (DNAAYNVRIMSAQKESPERVKELIEEMSSMGLKP), 277–311 (DTISYNYLMTAYCERGMLDEAKKVYEGLEGNNCAP), 312–346 (NAATFRTLIFHLCYSRLYEQGYAIFKKSVYMHKIP), and 347–377 (DFNTLKHLVVGLVENKKRDDAKGLIRTVKKK).

Belongs to the PPR family. P subfamily. In terms of assembly, component of the mitochondrial ribosome small subunit.

It localises to the mitochondrion. The polypeptide is Small ribosomal subunit protein mL103 (rPPR7) (Arabidopsis thaliana (Mouse-ear cress)).